A 418-amino-acid chain; its full sequence is Equilibrative nucleotide transporter 6 (418 aa).

A run of 11 helical transmembrane segments spans residues 19–39 (AMIV…SMLT), 56–76 (VLTL…AYHE), 86–106 (LIGY…DLAT), 112–132 (FGPY…DATV), 142–162 (LMCP…GALT), 186–206 (MFLA…AYVL), 264–284 (HAVN…GFLY), 291–311 (GLGA…DLVG), 326–346 (KLIT…YFTA), 353–373 (WMIM…VCIM), and 392–412 (LVIF…LWLI).

Belongs to the SLC29A/ENT transporter (TC 2.A.57) family. As to expression, expressed in leaves and siliques.

The protein resides in the cell membrane. Its function is as follows. Nucleoside transporter that can mediate uptake of adenosine, uridine, guanosine or cytidine when expressed in a heterologous system (yeast). This is Equilibrative nucleotide transporter 6 (ENT6) from Arabidopsis thaliana (Mouse-ear cress).